Here is a 380-residue protein sequence, read N- to C-terminus: MTNNKKLYLYKLSSKAMNYSMDKNERNVLYLNKYLHEYNNKGTKLQNSNMMNSWNNQLYKFNKNEVINTLLTDKLVSKLLVKLFVIKEMGINNPSYLQGSQMGRRIFINRPKFKHTINTVYINFNYNDTNMKMINNKHTLYYGSLIKDINNILGCFNYKNHNNELFNIATYLSGLYNKKVMIMPNKMKYNYNDNVIFNSSISYDLDKYKGGLAGKTYSKLLRDNIPMNNSLSIKNNYMTNIINNNNIKYNNMISNNSLNIKDIYKSFDINKITNELLVNKYLIGLSMLFKGKNIKKAGVSRSIKEKLLFGSLSNKLYRKNSGLLVYKNNNNTTKYLNFDININKKYKLNYMPNHHAISQLSKVNKAKTGVYGISVKLNTI.

This sequence belongs to the universal ribosomal protein uS3 family.

It is found in the mitochondrion. In terms of biological role, essential for mitochondrial protein synthesis and required for the maturation of small ribosomal subunits. The chain is Small ribosomal subunit protein uS3m (VAR1) from Cyberlindnera mrakii (Yeast).